Reading from the N-terminus, the 317-residue chain is Ferrochelatase (317 aa).

Fe cation contacts are provided by His-191 and Glu-271.

This sequence belongs to the ferrochelatase family.

The protein resides in the cytoplasm. The catalysed reaction is heme b + 2 H(+) = protoporphyrin IX + Fe(2+). It functions in the pathway porphyrin-containing compound metabolism; protoheme biosynthesis; protoheme from protoporphyrin-IX: step 1/1. Functionally, catalyzes the ferrous insertion into protoporphyrin IX. The polypeptide is Ferrochelatase (Thermus thermophilus (strain ATCC BAA-163 / DSM 7039 / HB27)).